Here is a 426-residue protein sequence, read N- to C-terminus: Mothers against decapentaplegic homolog 7 (426 aa).

Residues 13–55 (LWRSRAPGGEDEEEGAGGGGGGGELRGEGATDSRAHGAGGGGP) are disordered. The span at 37–47 (LRGEGATDSRA) shows a compositional bias: basic and acidic residues. Lys64 and Lys70 each carry N6-acetyllysine; alternate. Glycyl lysine isopeptide (Lys-Gly) (interchain with G-Cter in ubiquitin); alternate cross-links involve residues Lys64 and Lys70. Positions 64 to 207 (KAVRGAKGHH…LSRLCELESP (144 aa)) constitute an MH1 domain. Residues Cys125, Cys180, Cys192, and His197 each contribute to the Zn(2+) site. Residues 208–211 (PPPY) carry the PY-motif motif. The segment at 208–217 (PPPYSRYPMD) is important for interaction with SMURF2. Ser249 is modified (phosphoserine). Positions 261-426 (WCVVAYWEEK…CWLEVIFNSR (166 aa)) constitute an MH2 domain.

It belongs to the dwarfin/SMAD family. Interacts with WWP1. Interacts with COPS5. Interacts with NEDD4L. Interacts with STAMBP. Interacts with RNF111, AXIN1 and AXIN2. Interacts with PPP1R15A. Interacts (via MH2 domain) with EP300. Interacts with ACVR1B, SMURF1, SMURF2 and TGFBR1; SMAD7 recruits SMURF1 and SMURF2 to the TGF-beta receptor and regulates its degradation. Interacts with PDPK1 (via PH domain). Interacts with TSC22D1/TSC-22; the interaction requires TGF-beta and the interaction is inhibited by TGFBR1. Phosphorylation on Ser-249 does not affect its stability, nuclear localization or inhibitory function in TGFB signaling; however it affects its ability to regulate transcription. Phosphorylated by PDPK1. In terms of processing, ubiquitinated by WWP1. Polyubiquitinated by RNF111, which is enhanced by AXIN1 and promotes proteasomal degradation. In response to TGF-beta, ubiquitinated by SMURF1; which promotes its degradation. Post-translationally, acetylation prevents ubiquitination and degradation mediated by SMURF1. Ubiquitous with higher expression in the lung and vascular endothelium.

The protein localises to the nucleus. Its subcellular location is the cytoplasm. In terms of biological role, antagonist of signaling by TGF-beta (transforming growth factor) type 1 receptor superfamily members; has been shown to inhibit TGF-beta (Transforming growth factor) and activin signaling by associating with their receptors thus preventing SMAD2 access. Functions as an adapter to recruit SMURF2 to the TGF-beta receptor complex. Also acts by recruiting the PPP1R15A-PP1 complex to TGFBR1, which promotes its dephosphorylation. Positively regulates PDPK1 kinase activity by stimulating its dissociation from the 14-3-3 protein YWHAQ which acts as a negative regulator. The chain is Mothers against decapentaplegic homolog 7 (SMAD7) from Homo sapiens (Human).